A 330-amino-acid polypeptide reads, in one-letter code: PDZ and LIM domain protein 4 (330 aa).

In terms of domain architecture, PDZ spans 1–84 (MTHSVTLRGP…HLTLSVSRPE (84 aa)). Disordered regions lie at residues 104 to 153 (DPES…SNEA) and 219 to 242 (EAGEGGDRPGSGGPRNLKPAASKL). 7 positions are modified to phosphoserine: serine 107, serine 111, serine 115, serine 118, serine 119, serine 124, and serine 134. A compositionally biased stretch (polar residues) spans 108–122 (QDCSPATSRRSSVSG). The 51-residue stretch at 255–305 (CTRCGHGIVGTIVKARDKLYHPECFMCSDCGLNLKQRGYFFLDERLYCENH) folds into the LIM zinc-binding domain.

Homodimer. Interacts (via C-terminus only or via combined C-terminus and LIM domain, but not LIM domain only) with PTPN13 (via the second or fourth PDZ domains). Found in a complex with PTPN13 and TRIP6. Interacts (via PDZ domain) with ACTN1 and ACTN2 (via C-terminal SDL residues). Interacts (via PDZ domain) with TRIP6 (via the second LIM domain or via the third LIM domain plus C-terminus). Interacts (via LIM domain) with GRIA1 (via C-terminus); this interaction as well as the interaction with alpha-actinin is required for their colocalization in early endosomes. Interacts with PDLIM1. Forms (via LIM domain) a heterodimer with PDLIM3. Interacts directly with SRC (via kinase domain and to a lesser extent the SH2 domain). Phosphorylated on tyrosine residue(s). Can be dephosphorylated by PTPN13. In terms of tissue distribution, expressed in several non-muscle tissues including lung, brain, ovary and uterus, and especially in epithelial cells at 14 dpc. In the uterus, high expression in the glandular epithelium, but absent in the simple columnar epithelium lining the uterus cavity.

The protein localises to the cytoplasm. The protein resides in the cytoskeleton. Its subcellular location is the cell projection. It localises to the dendritic spine. It is found in the early endosome membrane. The protein localises to the recycling endosome membrane. The protein resides in the nucleus. Its subcellular location is the perinuclear region. It localises to the lamellipodium. It is found in the synapse. The protein localises to the synaptosome. Its function is as follows. Suppresses SRC activation by recognizing and binding to active SRC and facilitating PTPN13-mediated dephosphorylation of SRC 'Tyr-419' leading to its inactivation. Inactivated SRC dissociates from this protein allowing the initiation of a new SRC inactivation cycle. Involved in reorganization of the actin cytoskeleton. In nonmuscle cells, binds to ACTN1 (alpha-actinin-1), increases the affinity of ACTN1 to F-actin (filamentous actin), and promotes formation of actin stress fibers. Involved in regulation of the synaptic AMPA receptor transport in dendritic spines of hippocampal pyramidal neurons directing the receptors toward an insertion at the postsynaptic membrane. Links endosomal surface-internalized GRIA1-containing AMPA receptors to the alpha-actinin/actin cytoskeleton. Increases AMPA receptor-mediated excitatory postsynaptic currents in neurons. This chain is PDZ and LIM domain protein 4 (Pdlim4), found in Mus musculus (Mouse).